Here is a 94-residue protein sequence, read N- to C-terminus: Neutrophil defensin 1 (94 aa).

A signal peptide spans M1–A19. Residues E20 to V64 constitute a propeptide that is removed on maturation. 3 disulfides stabilise this stretch: C66/C94, C68/C83, and C73/C93. At R78 the chain carries ADP-ribosylarginine; by ART1. Y85 is modified (phosphotyrosine). R88 carries the ADP-ribosylarginine; by ART1 modification.

It belongs to the alpha-defensin family. In terms of assembly, tetramer. Dimer. Interacts with RETN. In terms of processing, ADP-ribosylation drastically reduces cytotoxic and antibacterial activities, and enhances IL8 production.

The protein resides in the secreted. Its function is as follows. Effector molecule of the innate immune system that acts via antibiotic-like properties against a broad array of infectious agents including bacteria, fungi, and viruses or by promoting the activation and maturation of some APCs. Interacts with the essential precursor of cell wall synthesis lipid II to inhibit bacterial cell wall synthesis. Inhibits adenovirus infection via inhibition of viral disassembly at the vertex region, thereby restricting the release of internal capsid protein pVI, which is required for endosomal membrane penetration during cell entry. In addition, interaction with adenovirus capsid leads to the redirection of viral particles to TLR4 thereby promoting a NLRP3-mediated inflammasome response and interleukin 1-beta (IL-1beta) release. Induces the production of proinflammatory cytokines including type I interferon (IFN) in plasmacytoid dendritic cells (pDCs) by triggering the degradation of NFKBIA and nuclear translocation of IRF1, both of which are required for activation of pDCs. This Pan troglodytes (Chimpanzee) protein is Neutrophil defensin 1 (DEFA1).